The following is an 89-amino-acid chain: Small ribosomal subunit protein bS20 (89 aa).

The interval 1–28 (MTLANIKSAKKRAVQSEKSRQHNASQRS) is disordered.

This sequence belongs to the bacterial ribosomal protein bS20 family.

Functionally, binds directly to 16S ribosomal RNA. The protein is Small ribosomal subunit protein bS20 of Mannheimia succiniciproducens (strain KCTC 0769BP / MBEL55E).